The chain runs to 372 residues: N-methyl-L-tryptophan oxidase (372 aa).

4-34 is an FAD binding site; it reads DLIIIGSGSVGAAAGYYATRAGLNVLMTDAH. Residue Cys308 is modified to S-8alpha-FAD cysteine.

This sequence belongs to the MSOX/MTOX family. MTOX subfamily. As to quaternary structure, monomer. Requires FAD as cofactor.

The catalysed reaction is N(alpha)-methyl-L-tryptophan + O2 + H2O = L-tryptophan + formaldehyde + H2O2. Functionally, catalyzes the oxidative demethylation of N-methyl-L-tryptophan. This is N-methyl-L-tryptophan oxidase from Escherichia coli O1:K1 / APEC.